Consider the following 527-residue polypeptide: Phosphoenolpyruvate carboxykinase (ATP) (527 aa).

Substrate is bound by residues Arg56, Tyr191, and Lys197. Residues Lys197, His216, and 232–240 (GLSGTGKTT) contribute to the ATP site. Positions 197 and 216 each coordinate Mn(2+). Asp253 contributes to the Mn(2+) binding site. ATP-binding positions include Glu281, Arg318, 437–438 (RI), and Thr443. Position 318 (Arg318) interacts with substrate.

Belongs to the phosphoenolpyruvate carboxykinase (ATP) family. Mn(2+) is required as a cofactor.

The protein localises to the cytoplasm. The catalysed reaction is oxaloacetate + ATP = phosphoenolpyruvate + ADP + CO2. It functions in the pathway carbohydrate biosynthesis; gluconeogenesis. Involved in the gluconeogenesis. Catalyzes the conversion of oxaloacetate (OAA) to phosphoenolpyruvate (PEP) through direct phosphoryl transfer between the nucleoside triphosphate and OAA. This chain is Phosphoenolpyruvate carboxykinase (ATP), found in Shouchella clausii (strain KSM-K16) (Alkalihalobacillus clausii).